A 255-amino-acid polypeptide reads, in one-letter code: Geranylgeranylglyceryl phosphate synthase (255 aa).

Aspartate 31 and serine 60 together coordinate Mg(2+). Residues tyrosine 179–glycine 185, glycine 211–glycine 212, and glycine 233–threonine 234 each bind sn-glycerol 1-phosphate.

It belongs to the GGGP/HepGP synthase family. Group II subfamily. Mg(2+) serves as cofactor.

The protein resides in the cytoplasm. It carries out the reaction sn-glycerol 1-phosphate + (2E,6E,10E)-geranylgeranyl diphosphate = sn-3-O-(geranylgeranyl)glycerol 1-phosphate + diphosphate. It functions in the pathway membrane lipid metabolism; glycerophospholipid metabolism. Its function is as follows. Prenyltransferase that catalyzes the transfer of the geranylgeranyl moiety of geranylgeranyl diphosphate (GGPP) to the C3 hydroxyl of sn-glycerol-1-phosphate (G1P). This reaction is the first ether-bond-formation step in the biosynthesis of archaeal membrane lipids. This is Geranylgeranylglyceryl phosphate synthase from Methanothrix thermoacetophila (strain DSM 6194 / JCM 14653 / NBRC 101360 / PT) (Methanosaeta thermophila).